A 362-amino-acid polypeptide reads, in one-letter code: 3-dehydroquinate synthase (362 aa).

It belongs to the archaeal-type DHQ synthase family.

The catalysed reaction is 2-amino-2,3,7-trideoxy-D-lyxo-hept-6-ulosonate + NAD(+) + H2O = 3-dehydroquinate + NH4(+) + NADH + H(+). In terms of biological role, catalyzes the oxidative deamination and cyclization of 2-amino-3,7-dideoxy-D-threo-hept-6-ulosonic acid (ADH) to yield 3-dehydroquinate (DHQ), which is fed into the canonical shikimic pathway of aromatic amino acid biosynthesis. In Methanothrix thermoacetophila (strain DSM 6194 / JCM 14653 / NBRC 101360 / PT) (Methanosaeta thermophila), this protein is 3-dehydroquinate synthase.